The chain runs to 359 residues: Type-1 angiotensin II receptor (359 aa).

Residues 1–25 (MILNSSTEDGIKRIQDDCPKAGRHN) are Extracellular-facing. Residue asparagine 4 is glycosylated (N-linked (GlcNAc...) asparagine). The angiotensin II site is built by glutamine 15 and aspartate 17. 2 disulfide bridges follow: cysteine 18-cysteine 274 and cysteine 101-cysteine 180. A helical membrane pass occupies residues 26-55 (YIFVMIPTLYSIIFVVGIFGNSLVVIVIYF). At 56 to 61 (YMKLKT) the chain is on the cytoplasmic side. A helical membrane pass occupies residues 62-89 (VASVFLLNLALADLCFLLTLPLWAVYTA). Residues 90 to 98 (MEYRWPFGN) are Extracellular-facing. The chain crosses the membrane as a helical span at residues 99–125 (YLCKIASASVSFNLYASVFLLTCLSID). Over 126 to 141 (RYLAIVHPMKSRLRRT) the chain is Cytoplasmic. Residues 142–165 (MLVAKVTCIIIWLLAGLASLPAII) form a helical membrane-spanning segment. The Extracellular portion of the chain corresponds to 166–190 (HRNVFFIENTNITVCAFHYESQNST). Arginine 167 serves as a coordination point for angiotensin II. Asparagine 176 carries an N-linked (GlcNAc...) asparagine glycan. Residues phenylalanine 182, histidine 183, and tyrosine 184 each contribute to the angiotensin II site. N-linked (GlcNAc...) asparagine glycosylation is present at asparagine 188. The helical transmembrane segment at 191-216 (LPIGLGLTKNILGFLFPFLIILTSYT) threads the bilayer. Lysine 199 is a binding site for angiotensin II. Residues 217-239 (LIWKALKKAYEIQKNKPRNDDIF) lie on the Cytoplasmic side of the membrane. Residues 240 to 268 (KIIMAIVLFFFFSWIPHQIFTFLDVLIQL) form a helical membrane-spanning segment. Topologically, residues 269–278 (GIIRDCRIAD) are extracellular. The chain crosses the membrane as a helical span at residues 279–304 (IVDTAMPITICIAYFNNCLNPLFYGF). The Cytoplasmic portion of the chain corresponds to 305–359 (LGKKFKKYFLQLLKYIPPKAKSHSNLSTKMSTLSYRPSDNVSSSTKKPAPCFEVE). Residues 335–350 (STLSYRPSDNVSSSTK) are compositionally biased toward polar residues. The tract at residues 335-359 (STLSYRPSDNVSSSTKKPAPCFEVE) is disordered. Cysteine 355 is lipidated: S-palmitoyl cysteine.

Belongs to the G-protein coupled receptor 1 family. In terms of assembly, interacts with MAS1. Interacts with ARRB1. Interacts with FLNA (via filamin repeat 21); increases PKA-mediated phosphorylation of FLNA. C-terminal Ser or Thr residues may be phosphorylated.

It is found in the cell membrane. Its function is as follows. Receptor for angiotensin II, a vasoconstricting peptide, which acts as a key regulator of blood pressure and sodium retention by the kidney. The activated receptor in turn couples to G-alpha proteins G(q) (GNAQ, GNA11, GNA14 or GNA15) and thus activates phospholipase C and increases the cytosolic Ca(2+) concentrations, which in turn triggers cellular responses such as stimulation of protein kinase C. The chain is Type-1 angiotensin II receptor (AGTR1) from Pan troglodytes (Chimpanzee).